A 365-amino-acid chain; its full sequence is DNA replication and repair protein RecF (365 aa).

30–37 (GNNGMGKT) is an ATP binding site.

This sequence belongs to the RecF family.

The protein localises to the cytoplasm. In terms of biological role, the RecF protein is involved in DNA metabolism; it is required for DNA replication and normal SOS inducibility. RecF binds preferentially to single-stranded, linear DNA. It also seems to bind ATP. The protein is DNA replication and repair protein RecF of Parabacteroides distasonis (strain ATCC 8503 / DSM 20701 / CIP 104284 / JCM 5825 / NCTC 11152).